The primary structure comprises 448 residues: Homogentisate 1,2-dioxygenase (448 aa).

His-302 (proton acceptor) is an active-site residue. Fe cation contacts are provided by His-345 and Glu-351. Homogentisate contacts are provided by Tyr-360 and His-381. His-381 contacts Fe cation.

It belongs to the homogentisate dioxygenase family. Hexamer; dimer of trimers. Requires Fe cation as cofactor.

The catalysed reaction is homogentisate + O2 = 4-maleylacetoacetate + H(+). It participates in amino-acid degradation; L-phenylalanine degradation; acetoacetate and fumarate from L-phenylalanine: step 4/6. Functionally, involved in the catabolism of homogentisate (2,5-dihydroxyphenylacetate or 2,5-OH-PhAc), a central intermediate in the degradation of phenylalanine and tyrosine. Catalyzes the oxidative ring cleavage of the aromatic ring of homogentisate to yield maleylacetoacetate. The protein is Homogentisate 1,2-dioxygenase of Ralstonia pickettii (strain 12J).